Consider the following 448-residue polypeptide: Phosphoglucosamine mutase (448 aa).

Residue serine 101 is the Phosphoserine intermediate of the active site. Mg(2+) contacts are provided by serine 101, aspartate 242, aspartate 244, and aspartate 246. Serine 101 carries the phosphoserine modification.

The protein belongs to the phosphohexose mutase family. It depends on Mg(2+) as a cofactor. Activated by phosphorylation.

The enzyme catalyses alpha-D-glucosamine 1-phosphate = D-glucosamine 6-phosphate. In terms of biological role, catalyzes the conversion of glucosamine-6-phosphate to glucosamine-1-phosphate. This is Phosphoglucosamine mutase from Nitrobacter winogradskyi (strain ATCC 25391 / DSM 10237 / CIP 104748 / NCIMB 11846 / Nb-255).